Here is a 618-residue protein sequence, read N- to C-terminus: Isocitrate dehydrogenase kinase/phosphatase (618 aa).

ATP is bound by residues 332-338 and lysine 353; that span reads APGIKGM. The active site involves aspartate 388.

The protein belongs to the AceK family.

It localises to the cytoplasm. The catalysed reaction is L-seryl-[isocitrate dehydrogenase] + ATP = O-phospho-L-seryl-[isocitrate dehydrogenase] + ADP + H(+). Bifunctional enzyme which can phosphorylate or dephosphorylate isocitrate dehydrogenase (IDH) on a specific serine residue. This is a regulatory mechanism which enables bacteria to bypass the Krebs cycle via the glyoxylate shunt in response to the source of carbon. When bacteria are grown on glucose, IDH is fully active and unphosphorylated, but when grown on acetate or ethanol, the activity of IDH declines drastically concomitant with its phosphorylation. The chain is Isocitrate dehydrogenase kinase/phosphatase from Methylibium petroleiphilum (strain ATCC BAA-1232 / LMG 22953 / PM1).